The chain runs to 161 residues: Leucine-rich colipase-like protein 1 (161 aa).

The signal sequence occupies residues 1–25 (MSVSVWPPLLLLLLLLLLWAVPTFQ).

The chain is Leucine-rich colipase-like protein 1 (Lrcol1) from Mus musculus (Mouse).